The chain runs to 176 residues: Disulfide bond formation protein B (176 aa).

Over 1–14 (MLRFLNQCSRGRGA) the chain is Cytoplasmic. The helical transmembrane segment at 15–31 (WLLMAFTALALEMVALW) threads the bilayer. The Periplasmic segment spans residues 32-49 (FQHVMLLKPCVLCIYERC). The cysteines at positions 41 and 44 are disulfide-linked. The helical transmembrane segment at 50-65 (ALFGVMGAGLVGAIAP) threads the bilayer. Residues 66–71 (KTPLRY) lie on the Cytoplasmic side of the membrane. Residues 72 to 89 (VAMVIWIYSAWRGLQLAY) form a helical membrane-spanning segment. The Periplasmic segment spans residues 90-144 (EHTMIQLHPSPFMTCDFMARFPDWLPLGKWLPQVFVASGDCAERQWSFLTLEMPQ). Residues Cys104 and Cys130 are joined by a disulfide bond. The chain crosses the membrane as a helical span at residues 145–163 (WLLGIFAAYLVVAIAVVIA). The Cytoplasmic portion of the chain corresponds to 164–176 (QAFKPKKRDLFGR).

The protein belongs to the DsbB family.

The protein resides in the cell inner membrane. Functionally, required for disulfide bond formation in some periplasmic proteins. Acts by oxidizing the DsbA protein. The polypeptide is Disulfide bond formation protein B (Salmonella paratyphi A (strain ATCC 9150 / SARB42)).